The following is a 388-amino-acid chain: Succinate--CoA ligase [ADP-forming] subunit beta (388 aa).

The region spanning 9-245 (KALLKKYGVS…KSQENERELK (237 aa)) is the ATP-grasp domain. Residues lysine 46, 53–55 (GRG), glutamate 100, tyrosine 103, and glutamate 108 contribute to the ATP site. Positions 200 and 214 each coordinate Mg(2+). Substrate-binding positions include asparagine 265 and 322–324 (GIV).

The protein belongs to the succinate/malate CoA ligase beta subunit family. Heterotetramer of two alpha and two beta subunits. It depends on Mg(2+) as a cofactor.

It carries out the reaction succinate + ATP + CoA = succinyl-CoA + ADP + phosphate. The catalysed reaction is GTP + succinate + CoA = succinyl-CoA + GDP + phosphate. Its pathway is carbohydrate metabolism; tricarboxylic acid cycle; succinate from succinyl-CoA (ligase route): step 1/1. Functionally, succinyl-CoA synthetase functions in the citric acid cycle (TCA), coupling the hydrolysis of succinyl-CoA to the synthesis of either ATP or GTP and thus represents the only step of substrate-level phosphorylation in the TCA. The beta subunit provides nucleotide specificity of the enzyme and binds the substrate succinate, while the binding sites for coenzyme A and phosphate are found in the alpha subunit. This Acinetobacter baylyi (strain ATCC 33305 / BD413 / ADP1) protein is Succinate--CoA ligase [ADP-forming] subunit beta.